Reading from the N-terminus, the 427-residue chain is 3-phosphoshikimate 1-carboxyvinyltransferase (427 aa).

3-phosphoshikimate contacts are provided by Lys-22, Ser-23, and Arg-27. Residue Lys-22 coordinates phosphoenolpyruvate. Residues Gly-96 and Arg-124 each contribute to the phosphoenolpyruvate site. Positions 169, 170, 171, 197, 313, 336, and 340 each coordinate 3-phosphoshikimate. Gln-171 is a phosphoenolpyruvate binding site. Asp-313 acts as the Proton acceptor in catalysis. 3 residues coordinate phosphoenolpyruvate: Arg-344, Arg-386, and Lys-411.

Belongs to the EPSP synthase family. Monomer.

The protein localises to the cytoplasm. The enzyme catalyses 3-phosphoshikimate + phosphoenolpyruvate = 5-O-(1-carboxyvinyl)-3-phosphoshikimate + phosphate. The protein operates within metabolic intermediate biosynthesis; chorismate biosynthesis; chorismate from D-erythrose 4-phosphate and phosphoenolpyruvate: step 6/7. In terms of biological role, catalyzes the transfer of the enolpyruvyl moiety of phosphoenolpyruvate (PEP) to the 5-hydroxyl of shikimate-3-phosphate (S3P) to produce enolpyruvyl shikimate-3-phosphate and inorganic phosphate. In Salmonella typhi, this protein is 3-phosphoshikimate 1-carboxyvinyltransferase.